A 637-amino-acid chain; its full sequence is DNA gyrase subunit B (637 aa).

A Toprim domain is found at 421-535; that stretch reads SEIYIVEGDS…HGYVYIAQPP (115 aa). The Mg(2+) site is built by Glu-427, Asp-500, and Asp-502.

It belongs to the type II topoisomerase GyrB family. In terms of assembly, heterotetramer, composed of two GyrA and two GyrB chains. In the heterotetramer, GyrA contains the active site tyrosine that forms a transient covalent intermediate with DNA, while GyrB binds cofactors and catalyzes ATP hydrolysis. Mg(2+) is required as a cofactor. It depends on Mn(2+) as a cofactor. Ca(2+) serves as cofactor.

It is found in the cytoplasm. The enzyme catalyses ATP-dependent breakage, passage and rejoining of double-stranded DNA.. Functionally, a type II topoisomerase that negatively supercoils closed circular double-stranded (ds) DNA in an ATP-dependent manner to modulate DNA topology and maintain chromosomes in an underwound state. Negative supercoiling favors strand separation, and DNA replication, transcription, recombination and repair, all of which involve strand separation. Also able to catalyze the interconversion of other topological isomers of dsDNA rings, including catenanes and knotted rings. Type II topoisomerases break and join 2 DNA strands simultaneously in an ATP-dependent manner. The polypeptide is DNA gyrase subunit B (Halalkalibacterium halodurans (strain ATCC BAA-125 / DSM 18197 / FERM 7344 / JCM 9153 / C-125) (Bacillus halodurans)).